A 340-amino-acid chain; its full sequence is MSFDALLLLSFGGPEAPEQVMPFLENVTRGRGIPRERLESVAEHYLHFGGVSPINGINRDLIVAIEAELARRGRNLPVYFGNRNWEPYVEDTVKAMSDNGIRRAAVFATSAWGGYSGCAQYQEDIARGRAAAGPEAPELVKLRQYFDHPLFVEMFADAVADAAATLPEELRDEARLVFTAHSIPLRAASRCGADLYERQVGYAARLVAAAAGYREYDQVWQSRSGPPQVPWLEPDVGDHLEALARNGTRAVIVCPLGFVADHIEVVWDLDNELAEQAAEAGIAFARAATPNSQPRFAQLVVDLIDEMLHGLPPRRVEGPDPVPAYGSSVNGAPCTPACSA.

Ser-52 and Tyr-121 together coordinate Fe-coproporphyrin III. Residues His-181 and Glu-264 each contribute to the Fe(2+) site.

This sequence belongs to the ferrochelatase family.

It localises to the cytoplasm. It catalyses the reaction Fe-coproporphyrin III + 2 H(+) = coproporphyrin III + Fe(2+). It functions in the pathway porphyrin-containing compound metabolism; protoheme biosynthesis. Its function is as follows. Involved in coproporphyrin-dependent heme b biosynthesis. Catalyzes the insertion of ferrous iron into coproporphyrin III to form Fe-coproporphyrin III. The protein is Coproporphyrin III ferrochelatase of Mycolicibacterium smegmatis (strain ATCC 700084 / mc(2)155) (Mycobacterium smegmatis).